A 260-amino-acid polypeptide reads, in one-letter code: Global transcriptional regulator CodY (260 aa).

The tract at residues 1–159 (MPNLLEKTRK…SSTVVGIQLL (159 aa)) is GAF domain. The H-T-H motif DNA-binding region spans 207 to 226 (ASVIADRIGITRSVIVNALR).

Belongs to the CodY family.

The protein resides in the cytoplasm. Its function is as follows. DNA-binding global transcriptional regulator which is involved in the adaptive response to starvation and acts by directly or indirectly controlling the expression of numerous genes in response to nutrient availability. During rapid exponential growth, CodY is highly active and represses genes whose products allow adaptation to nutrient depletion. The chain is Global transcriptional regulator CodY from Streptococcus equi subsp. zooepidemicus (strain H70).